A 63-amino-acid chain; its full sequence is Large ribosomal subunit protein bL28 (63 aa).

Belongs to the bacterial ribosomal protein bL28 family.

The protein is Large ribosomal subunit protein bL28 of Hydrogenobaculum sp. (strain Y04AAS1).